The sequence spans 98 residues: NADH-ubiquinone oxidoreductase chain 4L (98 aa).

The next 3 helical transmembrane spans lie at 1 to 21 (MTPTHMNITLAFTISLLGMLI), 26 to 46 (LMASLLCLEGMMMSLFIMTAV), and 61 to 81 (IIMLVFAACEAAVGLALLVSI).

The protein belongs to the complex I subunit 4L family. Core subunit of respiratory chain NADH dehydrogenase (Complex I) which is composed of 45 different subunits.

It localises to the mitochondrion inner membrane. It catalyses the reaction a ubiquinone + NADH + 5 H(+)(in) = a ubiquinol + NAD(+) + 4 H(+)(out). Its function is as follows. Core subunit of the mitochondrial membrane respiratory chain NADH dehydrogenase (Complex I) which catalyzes electron transfer from NADH through the respiratory chain, using ubiquinone as an electron acceptor. Part of the enzyme membrane arm which is embedded in the lipid bilayer and involved in proton translocation. The chain is NADH-ubiquinone oxidoreductase chain 4L (MT-ND4L) from Papio hamadryas (Hamadryas baboon).